We begin with the raw amino-acid sequence, 343 residues long: tRNA N6-adenosine threonylcarbamoyltransferase (343 aa).

Fe cation is bound by residues histidine 115 and histidine 119. Substrate-binding positions include 138 to 142 (LVSGA), aspartate 171, glycine 184, and asparagine 276. Aspartate 304 lines the Fe cation pocket.

It belongs to the KAE1 / TsaD family. Fe(2+) is required as a cofactor.

The protein resides in the cytoplasm. The enzyme catalyses L-threonylcarbamoyladenylate + adenosine(37) in tRNA = N(6)-L-threonylcarbamoyladenosine(37) in tRNA + AMP + H(+). Functionally, required for the formation of a threonylcarbamoyl group on adenosine at position 37 (t(6)A37) in tRNAs that read codons beginning with adenine. Is involved in the transfer of the threonylcarbamoyl moiety of threonylcarbamoyl-AMP (TC-AMP) to the N6 group of A37, together with TsaE and TsaB. TsaD likely plays a direct catalytic role in this reaction. The protein is tRNA N6-adenosine threonylcarbamoyltransferase of Buchnera aphidicola subsp. Cinara cedri (strain Cc).